The chain runs to 274 residues: MNYKPRTKVIAGNWKMHKCKDEALEFIQKVSLQVPDQTQVQTLIFPQLTLLDPLVQLQGANLQVGAQNMFYETEGAFTGEVSPQNLLSLGVKHVLLGHSERRTLFGETDQTVNLKLLSALKHKLVPTVCVGESLLTKENNQTQMFLDQQLTNIFAGVPEEALKNMIIAYEPVWAIGTGKSANPQDANKTIEQIREKVTALYSFQASCAIRIIYGGSLSVANIKSILEQPAIDGILAGKASLQTEDFLFFAQIASKQVLVSTKDIFQKNDCPFCY.

Residue 13-15 coordinates substrate; it reads NWK. H98 acts as the Electrophile in catalysis. The active-site Proton acceptor is the E170. Substrate is bound by residues G176 and S216.

The protein belongs to the triosephosphate isomerase family. In terms of assembly, homodimer.

Its subcellular location is the cytoplasm. The enzyme catalyses D-glyceraldehyde 3-phosphate = dihydroxyacetone phosphate. Its pathway is carbohydrate biosynthesis; gluconeogenesis. The protein operates within carbohydrate degradation; glycolysis; D-glyceraldehyde 3-phosphate from glycerone phosphate: step 1/1. Its function is as follows. Involved in the gluconeogenesis. Catalyzes stereospecifically the conversion of dihydroxyacetone phosphate (DHAP) to D-glyceraldehyde-3-phosphate (G3P). The protein is Triosephosphate isomerase of Aster yellows witches'-broom phytoplasma (strain AYWB).